Consider the following 320-residue polypeptide: Phosphoribosylaminoimidazole-succinocarboxamide synthase (320 aa).

Residues 283-303 are disordered; sequence ESDWDRNSPPPPLPESIAHQT.

This sequence belongs to the SAICAR synthetase family.

The enzyme catalyses 5-amino-1-(5-phospho-D-ribosyl)imidazole-4-carboxylate + L-aspartate + ATP = (2S)-2-[5-amino-1-(5-phospho-beta-D-ribosyl)imidazole-4-carboxamido]succinate + ADP + phosphate + 2 H(+). The protein operates within purine metabolism; IMP biosynthesis via de novo pathway; 5-amino-1-(5-phospho-D-ribosyl)imidazole-4-carboxamide from 5-amino-1-(5-phospho-D-ribosyl)imidazole-4-carboxylate: step 1/2. This chain is Phosphoribosylaminoimidazole-succinocarboxamide synthase, found in Rhodopirellula baltica (strain DSM 10527 / NCIMB 13988 / SH1).